We begin with the raw amino-acid sequence, 3165 residues long: ORFB polyprotein (3165 aa).

Residues methionine 271–glycine 418 form the Peptidase C8 domain. Catalysis depends on for papain-like protease p48 activity residues cysteine 341 and histidine 388. Residues alanine 453–glutamate 472 are disordered. A run of 6 helical transmembrane segments spans residues isoleucine 791–tyrosine 811, tyrosine 823–cysteine 843, alanine 1166–methionine 1186, lysine 1193–tryptophan 1213, phenylalanine 1215–tyrosine 1235, and alanine 1356–proline 1376. An RNA-directed RNA polymerase region spans residues phenylalanine 1793 to tryptophan 2208. 3 helical membrane-spanning segments follow: residues valine 2495–valine 2515, leucine 2517–tryptophan 2537, and leucine 2590–phenylalanine 2610. The region spanning alanine 2651–lysine 2796 is the Helicase ATP-binding domain. ATP is bound at residue alanine 2664 to serine 2671. Positions aspartate 2751 to histidine 2754 match the DEFH box motif.

It in the C-terminal section; belongs to the DEAD box helicase family. Papain-like protease p48 is autocatalytically processed. The putative RNA-directed RNA polymerase/helicase may be further processed.

It is found in the host membrane. It catalyses the reaction RNA(n) + a ribonucleoside 5'-triphosphate = RNA(n+1) + diphosphate. The enzyme catalyses ATP + H2O = ADP + phosphate + H(+). In terms of biological role, papain-like protease p48 is a cysteine protease of the peptidase family C8. The chain is ORFB polyprotein from Cryphonectria hypovirus 1 (strain EP713) (CHV-1/EP713).